The sequence spans 210 residues: Thymidylate kinase (210 aa).

11 to 18 is a binding site for ATP; the sequence is GLEGAGKS.

It belongs to the thymidylate kinase family.

It catalyses the reaction dTMP + ATP = dTDP + ADP. Phosphorylation of dTMP to form dTDP in both de novo and salvage pathways of dTTP synthesis. The chain is Thymidylate kinase from Vibrio campbellii (strain ATCC BAA-1116).